A 244-amino-acid chain; its full sequence is Putative ribosomal recycling factor, mitochondrial (244 aa).

This sequence belongs to the RRF family.

It localises to the mitochondrion. Necessary for protein synthesis in mitochondria. Functions as a ribosome recycling factor in mitochondria. This Schizosaccharomyces pombe (strain 972 / ATCC 24843) (Fission yeast) protein is Putative ribosomal recycling factor, mitochondrial (rrf1).